The chain runs to 268 residues: DNA ligase (268 aa).

Residue Lys41 is the N6-AMP-lysine intermediate of the active site. Positions 111, 181, and 187 each coordinate ATP.

The protein belongs to the ATP-dependent DNA ligase family. It depends on a divalent metal cation as a cofactor.

The catalysed reaction is ATP + (deoxyribonucleotide)n-3'-hydroxyl + 5'-phospho-(deoxyribonucleotide)m = (deoxyribonucleotide)n+m + AMP + diphosphate.. Catalyzes efficient strand joining on a single nicked DNA. This chain is DNA ligase (ligA), found in Haemophilus influenzae (strain ATCC 51907 / DSM 11121 / KW20 / Rd).